A 184-amino-acid polypeptide reads, in one-letter code: Ribosome-recycling factor (184 aa).

Belongs to the RRF family.

It is found in the cytoplasm. Its function is as follows. Responsible for the release of ribosomes from messenger RNA at the termination of protein biosynthesis. May increase the efficiency of translation by recycling ribosomes from one round of translation to another. The protein is Ribosome-recycling factor of Oleidesulfovibrio alaskensis (strain ATCC BAA-1058 / DSM 17464 / G20) (Desulfovibrio alaskensis).